Consider the following 112-residue polypeptide: Ig kappa chain V-III region TEPC 124 (112 aa).

The framework-1 stretch occupies residues 1–23 (DIVLTQSPASLAVSLGQRATISC). A disulfide bond links cysteine 23 and cysteine 92. The tract at residues 24–38 (RASZSVNWYGNSFMZ) is complementarity-determining-1. Positions 39–53 (WYZZKPGZPPKLLIY) are framework-2. The complementarity-determining-2 stretch occupies residues 54–60 (RASNLZS). The segment at 61 to 92 (GIPARFSGSGSRTBFTLTIBPVZABDVATYFC) is framework-3. The interval 93–101 (ZZSBZAPWT) is complementarity-determining-3. The interval 102–111 (FGSGTKLEIK) is framework-4.

This chain is Ig kappa chain V-III region TEPC 124, found in Mus musculus (Mouse).